Reading from the N-terminus, the 66-residue chain is Large ribosomal subunit protein uL29 (66 aa).

This sequence belongs to the universal ribosomal protein uL29 family.

The sequence is that of Large ribosomal subunit protein uL29 from Chelativorans sp. (strain BNC1).